The sequence spans 494 residues: Glutamate--tRNA ligase (494 aa).

The 'HIGH' region motif lies at 10-20; the sequence is PSPTGDPHVGT. C107, C109, C134, and H136 together coordinate Zn(2+). The 'KMSKS' region motif lies at 251–255; it reads KLSKR. K254 contributes to the ATP binding site.

This sequence belongs to the class-I aminoacyl-tRNA synthetase family. Glutamate--tRNA ligase type 1 subfamily. As to quaternary structure, monomer. Zn(2+) serves as cofactor.

It localises to the cytoplasm. The enzyme catalyses tRNA(Glu) + L-glutamate + ATP = L-glutamyl-tRNA(Glu) + AMP + diphosphate. In terms of biological role, catalyzes the attachment of glutamate to tRNA(Glu) in a two-step reaction: glutamate is first activated by ATP to form Glu-AMP and then transferred to the acceptor end of tRNA(Glu). This chain is Glutamate--tRNA ligase, found in Pseudomonas paraeruginosa (strain DSM 24068 / PA7) (Pseudomonas aeruginosa (strain PA7)).